Here is a 266-residue protein sequence, read N- to C-terminus: Type 1 encapsulin shell protein (266 aa).

This sequence belongs to the encapsulin family. Family 1 subfamily. In terms of assembly, homomultimeric. This encapsulin nanocompartment is formed by 60 subunits, and encloses one Dyp homohexamer; partially assembled 58-subunit compartments with and without cargo are also purified. May assemble the shell from dimers. Monomers form pentamers, which assemble to form hollow shells with pores 5-8 Angstroms in diameter where 3 pentamers meet.

The protein localises to the encapsulin nanocompartment. Shell component of a type 1 encapsulin nanocompartment. Assembles into proteinaceous shells 23-24 nm in diameter with 2-2.5 nm thick walls. Endogenous cargo protein DyP (dye-decolorizing peroxidase) is targeted to the interior via its C-terminal extension; only 1 DyP hexamer is incorporated into each shell. Empty shells can be isolated in the absence of cargo. Cargo encapsulation probably precedes assembly of the nanocompartment; may assemble or disassemble via dimers, subcomplexes with a distinct preference for even numbers of subunits are detected. Nanocompartments are stable against mechanical forces; loaded nanocompartments are less stable than empty ones. Nanocompartments are stable between pH 5-10; they aggregate at pH 9-10 and start to disassemble at pH 11. They are stable in 1M NaCl, 1 M MgCl(2) and 1M CaCl(2), unstable in 20% DMSO (dimethylsulfoxide) and are stable in 20% but not 40% ethanol. The protein is Type 1 encapsulin shell protein of Brevibacterium linens.